We begin with the raw amino-acid sequence, 366 residues long: tRNA/tmRNA (uracil-C(5))-methyltransferase (366 aa).

S-adenosyl-L-methionine is bound by residues Gln-190, Tyr-218, Asn-223, Glu-239, and Asp-299. Cys-324 functions as the Nucleophile in the catalytic mechanism. Residue Glu-358 is the Proton acceptor of the active site.

Belongs to the class I-like SAM-binding methyltransferase superfamily. RNA M5U methyltransferase family. TrmA subfamily.

It carries out the reaction uridine(54) in tRNA + S-adenosyl-L-methionine = 5-methyluridine(54) in tRNA + S-adenosyl-L-homocysteine + H(+). The enzyme catalyses uridine(341) in tmRNA + S-adenosyl-L-methionine = 5-methyluridine(341) in tmRNA + S-adenosyl-L-homocysteine + H(+). Dual-specificity methyltransferase that catalyzes the formation of 5-methyluridine at position 54 (m5U54) in all tRNAs, and that of position 341 (m5U341) in tmRNA (transfer-mRNA). In Escherichia coli O157:H7, this protein is tRNA/tmRNA (uracil-C(5))-methyltransferase.